The sequence spans 173 residues: MGTPCHFALFDLQPCFRLDLDKLATRYRELAREVHPDRFADASEREQRVALEKSAALNDAYQTLRSAPRRARYLLAIGGHEVPQEVTVHDPDFLLQQMQWREELEELQDEADLDGVAVFKKRLKAAQEQLNEDFAACWDVPAERDKAERLMRRMQFLDKLAQEVRQLEERLDD.

The 73-residue stretch at 5–77 (CHFALFDLQP…PRRARYLLAI (73 aa)) folds into the J domain.

The protein belongs to the HscB family. Interacts with HscA and stimulates its ATPase activity.

In terms of biological role, co-chaperone involved in the maturation of iron-sulfur cluster-containing proteins. Seems to help targeting proteins to be folded toward HscA. The protein is Co-chaperone protein HscB homolog of Pseudomonas putida (strain W619).